The following is a 221-amino-acid chain: Ribonuclease T (221 aa).

Residues Val-20–Phe-194 enclose the Exonuclease domain. Residues Asp-23, Glu-25, His-181, and Asp-186 each contribute to the Mg(2+) site. Residue His-181 is the Proton donor/acceptor of the active site.

This sequence belongs to the RNase T family. As to quaternary structure, homodimer. The cofactor is Mg(2+).

Its function is as follows. Trims short 3' overhangs of a variety of RNA species, leaving a one or two nucleotide 3' overhang. Responsible for the end-turnover of tRNA: specifically removes the terminal AMP residue from uncharged tRNA (tRNA-C-C-A). Also appears to be involved in tRNA biosynthesis. In Shewanella frigidimarina (strain NCIMB 400), this protein is Ribonuclease T.